Here is a 383-residue protein sequence, read N- to C-terminus: Fatty acid hydroxylase ahd1 (383 aa).

A run of 4 helical transmembrane segments spans residues 84-104, 123-143, 172-192, and 214-236; these read VMGL…NKSW, TVHT…LFAL, LIPV…IIYY, and VAQW…RALH. The 125-residue stretch at 217–341 folds into the Fatty acid hydroxylase domain; it reads WLVCLLMEDI…VGLLDAIFKT (125 aa). The N-linked (GlcNAc...) asparagine glycan is linked to Asn342.

This sequence belongs to the sterol desaturase family.

The protein resides in the membrane. Its pathway is secondary metabolite biosynthesis. Functionally, fatty acid hydroxylase; part of the gene cluster that mediates the biosynthesis of the glycolipid biosurfactant ustilagic acid (UA). UA is a secreted cellobiose glycolipid that is toxic for many microorganisms and confers biocontrol activity to U.maydis. UA consists of 15,16-dihydroxypalmitic or 2,15,16-trihydroxypalmitic acid, which is O-glycosidically linked to cellobiose at its terminal hydroxyl group. In addition, the cellobiose moiety is acetylated and acylated with a short-chain hydroxy fatty acid. UA biosynthesis starts with omega-hydroxylation of palmitic acid catalyzed by the cytochrome P450 monooxygenase cyp1. Terminal hydroxylation of palmitic acid precedes subterminal hydroxylation catalyzed by the cytochrome P450 monooxygenase cyp2. Sequential glucosylation of the hydroxy fatty acid is probably catalyzed by the glycosyltransferase ugt1. The cellobiose lipid is further decorated by acetylation of the proximal glucose residue and by acylation with a short-chain beta-hydroxy fatty acid at the distal glucose residue. The acyltransferase uat1 may be a good candidate for catalyzing either acetylation or acylation of the cellobiose lipid. The fatty acid synthase fas2 may be involved in synthesis of the carbon backbone of the short-chain beta-hydroxy fatty acid esterified to the cellobiose disaccharide. The secreted UA consists of a mixture of both alpha-hydroxylated and non-hydroxylated glycolipids; therefore, alpha-hydroxylation of the long-chain fatty, catalyzed by the fatty acid hydroxylase ahd1, occurs late in UA biosynthesis and may be the last step before secretion. This chain is Fatty acid hydroxylase ahd1, found in Mycosarcoma maydis (Corn smut fungus).